A 243-amino-acid polypeptide reads, in one-letter code: MVLNFKFFTCENSLEDNSTTMLKNSIESSFINKTLTNSIILTTFNDFSNWARLSSLWPLLYGTSCCFIEFASLIGSRFDFDRYGLVPRSSPRQADLIITAGTVTMKMAPSLVRLYEQMPEPKYVIAMGACTITGGMFSTDSYTTVRGVDKLIPVDIYLPGCPPKPEAIIDAIIKLRKKIAQEIYEEKKILKKGTRFFTLNHQFNFFSNLDNPKLTSSNQFFQSKKTSKVLLETSLTFKEKENL.

Cys-65, Cys-66, Cys-130, and Cys-161 together coordinate [4Fe-4S] cluster.

The protein belongs to the complex I 20 kDa subunit family. In terms of assembly, NDH is composed of at least 16 different subunits, 5 of which are encoded in the nucleus. It depends on [4Fe-4S] cluster as a cofactor.

It localises to the plastid. The protein resides in the chloroplast thylakoid membrane. The catalysed reaction is a plastoquinone + NADH + (n+1) H(+)(in) = a plastoquinol + NAD(+) + n H(+)(out). It carries out the reaction a plastoquinone + NADPH + (n+1) H(+)(in) = a plastoquinol + NADP(+) + n H(+)(out). Its function is as follows. NDH shuttles electrons from NAD(P)H:plastoquinone, via FMN and iron-sulfur (Fe-S) centers, to quinones in the photosynthetic chain and possibly in a chloroplast respiratory chain. The immediate electron acceptor for the enzyme in this species is believed to be plastoquinone. Couples the redox reaction to proton translocation, and thus conserves the redox energy in a proton gradient. In Marchantia polymorpha (Common liverwort), this protein is NAD(P)H-quinone oxidoreductase subunit K, chloroplastic.